Reading from the N-terminus, the 506-residue chain is ATP synthase subunit alpha, mitochondrial (506 aa).

171-178 serves as a coordination point for ATP; the sequence is GDRQTGKT.

This sequence belongs to the ATPase alpha/beta chains family. F-type ATPases have 2 components, CF(1) - the catalytic core - and CF(0) - the membrane proton channel. CF(1) has five subunits: alpha(3), beta(3), gamma(1), delta(1), epsilon(1). CF(0) has three main subunits: a, b and c.

It is found in the mitochondrion. The protein localises to the mitochondrion inner membrane. Mitochondrial membrane ATP synthase (F(1)F(0) ATP synthase or Complex V) produces ATP from ADP in the presence of a proton gradient across the membrane which is generated by electron transport complexes of the respiratory chain. F-type ATPases consist of two structural domains, F(1) - containing the extramembraneous catalytic core, and F(0) - containing the membrane proton channel, linked together by a central stalk and a peripheral stalk. During catalysis, ATP synthesis in the catalytic domain of F(1) is coupled via a rotary mechanism of the central stalk subunits to proton translocation. Subunits alpha and beta form the catalytic core in F(1). Rotation of the central stalk against the surrounding alpha(3)beta(3) subunits leads to hydrolysis of ATP in three separate catalytic sites on the beta subunits. Subunit alpha does not bear the catalytic high-affinity ATP-binding sites. The polypeptide is ATP synthase subunit alpha, mitochondrial (ATPA) (Beta vulgaris (Sugar beet)).